Consider the following 1627-residue polypeptide: Pappalysin-1 (1627 aa).

A signal peptide spans 1 to 22 (MRLWSWVLHLGLLSAALGCGLA). Positions 23-81 (ERPRRARRDPRAGRPPRPAAGPATCATRAARGRRASPPPPPPPGGAWEAVRVPRRRQQR) are excised as a propeptide. The segment at 23–99 (ERPRRARRDP…PSPPSRALYF (77 aa)) is disordered. The span at 42 to 51 (AGPATCATRA) shows a compositional bias: low complexity. Intrachain disulfides connect Cys144/Cys235, Cys327/Cys622, Cys332/Cys657, Cys414/Cys428, Cys424/Cys440, Cys457/Cys473, Cys474/Cys485, Cys583/Cys600, Cys587/Cys612, Cys710/Cys878, Cys713/Cys881, Cys753/Cys835, Cys775/Cys781, Cys947/Cys975, Cys960/Cys971, Cys983/Cys990, and Cys999/Cys1011. Positions 272–583 (METHGAHTAL…FRGISEIQSC (312 aa)) are metalloprotease. Residues Asn390 and Asn402 are each glycosylated (N-linked (GlcNAc...) asparagine). Residue Asn429 is glycosylated (N-linked (GlcNAc...) asparagine). N-linked (GlcNAc...) asparagine glycosylation occurs at Asn480. His562 is a binding site for Zn(2+). Glu563 is a catalytic residue. Positions 566 and 572 each coordinate Zn(2+). Residues Asn601, Asn619, and Asn725 are each glycosylated (N-linked (GlcNAc...) asparagine). Residues 733 to 754 (SPSGHWSPREAEGHPDVEQPCK) are disordered. Positions 739-751 (SPREAEGHPDVEQ) are enriched in basic and acidic residues. Asn825 carries N-linked (GlcNAc...) asparagine glycosylation. Residue Asn1026 is glycosylated (N-linked (GlcNAc...) asparagine). Intrachain disulfides connect Cys1036–Cys1070, Cys1051–Cys1139, Cys1192–Cys1205, Cys1215–Cys1269, Cys1227–Cys1238, Cys1242–Cys1280, Cys1285–Cys1329, Cys1300–Cys1310, Cys1314–Cys1342, Cys1346–Cys1399, Cys1362–Cys1373, Cys1377–Cys1410, Cys1415–Cys1458, Cys1428–Cys1438, Cys1442–Cys1471, Cys1478–Cys1539, Cys1492–Cys1502, Cys1506–Cys1554, and Cys1558–Cys1576. Sushi domains are found at residues 1213–1282 (TDCP…ACEP), 1283–1344 (VDCS…LCEL), 1345–1412 (MCLA…ACVP), 1413–1473 (VTCD…VCQE), and 1476–1556 (GQCS…HCVK). Residues Asn1222 and Asn1226 are each glycosylated (N-linked (GlcNAc...) asparagine). Residue Asn1323 is glycosylated (N-linked (GlcNAc...) asparagine). N-linked (GlcNAc...) asparagine glycosylation occurs at Asn1465. An N-linked (GlcNAc...) asparagine glycan is attached at Asn1519.

This sequence belongs to the peptidase M43B family. Homodimer; disulfide-linked. In pregnancy serum, predominantly found as a disulfide-linked 2:2 heterotetramer with the proform of PRG2. Requires Zn(2+) as cofactor. In terms of processing, there appear to be no free sulfhydryl groups. As to expression, high levels in placenta and pregnancy serum. In placenta, expressed in X cells in septa and anchoring villi, and in syncytiotrophoblasts in the chorionic villi. Lower levels are found in a variety of other tissues including kidney, myometrium, endometrium, ovaries, breast, prostate, bone marrow, colon, fibroblasts and osteoblasts.

The protein resides in the secreted. It carries out the reaction Cleavage of the 135-Met-|-Lys-136 bond in insulin-like growth factor binding protein (IGFBP)-4, and the 143-Ser-|-Lys-144 bond in IGFBP-5.. With respect to regulation, inhibited by complexation with the proform of PRG2. In terms of biological role, metalloproteinase which specifically cleaves IGFBP-4 and IGFBP-5, resulting in release of bound IGF. Cleavage of IGFBP-4 is dramatically enhanced by the presence of IGF, whereas cleavage of IGFBP-5 is slightly inhibited by the presence of IGF. The polypeptide is Pappalysin-1 (PAPPA) (Homo sapiens (Human)).